The chain runs to 202 residues: MADS-box transcription factor 33 (202 aa).

The MADS-box domain maps to 1-61 (MVRGKVQMRR…GKLHELATNG (61 aa)). Residues 87–177 (QQVAEQGIFL…QEKVKEQQKL (91 aa)) enclose the K-box domain.

As to expression, expressed in seedling roots.

It localises to the nucleus. In terms of biological role, probable transcription factor. The chain is MADS-box transcription factor 33 (MADS33) from Oryza sativa subsp. japonica (Rice).